The following is a 362-amino-acid chain: Ribosomal RNA large subunit methyltransferase M (362 aa).

Residues S187, 220 to 223, D239, D259, and D276 contribute to the S-adenosyl-L-methionine site; that span reads CPGG. The Proton acceptor role is filled by K305.

It belongs to the class I-like SAM-binding methyltransferase superfamily. RNA methyltransferase RlmE family. RlmM subfamily. As to quaternary structure, monomer.

The protein localises to the cytoplasm. The catalysed reaction is cytidine(2498) in 23S rRNA + S-adenosyl-L-methionine = 2'-O-methylcytidine(2498) in 23S rRNA + S-adenosyl-L-homocysteine + H(+). Catalyzes the 2'-O-methylation at nucleotide C2498 in 23S rRNA. In Shewanella frigidimarina (strain NCIMB 400), this protein is Ribosomal RNA large subunit methyltransferase M.